A 71-amino-acid chain; its full sequence is Serine palmitoyltransferase small subunit A (71 aa).

Residues 1-12 (MAGMALARAWKQ) lie on the Cytoplasmic side of the membrane. A helical transmembrane segment spans residues 13 to 29 (MSWFYYQYLLVTALYML). Over 30–34 (EPWER) the chain is Lumenal. A helical membrane pass occupies residues 35-57 (TVFNSMLVSIVGMALYTGYVFMP). At 58-71 (QHIMAILHYFEIVQ) the chain is on the cytoplasmic side.

This sequence belongs to the SPTSS family. SPTSSA subfamily. In terms of assembly, component of the serine palmitoyltransferase (SPT) complex, which is composed of SPTLC1, SPTLC2 or SPTLC3 and SPTSSA or SPTSSB. The heterodimer consisting of SPTLC1 and SPTLC2/SPTLC3 forms the catalytic core of the enzyme, while SPTSSA or SPTSSB subunits determine substrate specificity. SPT also interacts with ORMDL proteins, especially ORMDL3, which negatively regulate SPT activity in the presence of ceramides. Interacts with MBOAT7; the interaction plays a role in MBOAT7 localization to mitochondria-associated membranes.

The protein resides in the endoplasmic reticulum membrane. The protein operates within lipid metabolism; sphingolipid metabolism. In terms of biological role, component of the serine palmitoyltransferase multisubunit enzyme (SPT) that catalyzes the initial and rate-limiting step in sphingolipid biosynthesis by condensing L-serine and activated acyl-CoA (most commonly palmitoyl-CoA) to form long-chain bases. The SPT complex is composed of SPTLC1, SPTLC2 or SPTLC3 and SPTSSA or SPTSSB. Within this complex, the heterodimer consisting of SPTLC1 and SPTLC2/SPTLC3 forms the catalytic core. Within the SPT complex, SPTSSA stimulates the catalytic activity and plays a role in substrate specificity, which depends upon the overall complex composition. The SPTLC1-SPTLC2-SPTSSA complex shows a strong preference for C16-CoA substrate, while the SPTLC1-SPTLC3-SPTSSA isozyme uses both C14-CoA and C16-CoA as substrates, with a slight preference for C14-CoA. Independently of its action as a SPT component, may be involved in MBOAT7 localization to mitochondria-associated membranes, a membrane bridge between the endoplasmic reticulum and mitochondria, may hence affect MBOAT7-catalyzed incorporation of arachidonic acid into phosphatidylinositol. The sequence is that of Serine palmitoyltransferase small subunit A from Homo sapiens (Human).